Here is a 212-residue protein sequence, read N- to C-terminus: Golgi SNAP receptor complex member 2 homolog memb-1 (212 aa).

The Cytoplasmic portion of the chain corresponds to 1–189; it reads MEAQYQSTNF…QVIDRRVRED (189 aa). The helical; Anchor for type IV membrane protein transmembrane segment at 190 to 210 threads the bilayer; it reads WIFVIGCIVCCIFMYAFYRFW. Residues 211–212 are Vesicular-facing; sequence RG.

This sequence belongs to the GOSR2 family. As to quaternary structure, part of a unique SNARE complex.

It is found in the golgi apparatus. It localises to the cis-Golgi network membrane. The protein resides in the golgi apparatus membrane. The protein localises to the endoplasmic reticulum membrane. Its function is as follows. Involved in transport of proteins from the cis/medial-Golgi to the trans-Golgi network. This chain is Golgi SNAP receptor complex member 2 homolog memb-1, found in Caenorhabditis briggsae.